The primary structure comprises 505 residues: Cytochrome P450 monooxygenase FGM1 (505 aa).

An N-terminal signal peptide occupies residues 1 to 23 (MPLILSITSSGTVLVLLTLLSLA). Residues Asn-188 and Asn-351 are each glycosylated (N-linked (GlcNAc...) asparagine). Cys-450 lines the heme pocket.

Belongs to the cytochrome P450 family. Requires heme as cofactor.

Its pathway is secondary metabolite biosynthesis. Cytochrome P450 monooxygenase; part of the Fg3_54/C64 gene cluster that mediates the biosynthesis of the octapeptide fusaoctaxin A, a virulence factor that is required for cell-to-cell invasiveness of plant host. The 2 nonribosomal peptide synthetases NRPS9 and NRPS5 form an assembly line which likely utilizes GABA as a starter unit (loaded on the unique module M1 of NRPS9) and sequentially incorporates seven extender units composed of the residues L-Ala, L-allo-Ile, L-Ser, L-Val, L-Ser, L-Leu and L-Leu, respectively. During the process, each of the residues that are tethered on modules M3-M7 of NRPS5 containing an E domain can undergo an epimerization reaction to produce a D-configuration before the transpeptidation reaction occurs. The elongation of the peptidyl chain might be terminated by module M8-mediated L-Leu incorporation, followed by R domain-catalyzed 4 electron reduction to release the resulting octapeptide from the assembly line as an alcohol. Fusaoctaxin A is cleaved by the cluster specific ABC transporter FGM5 to the pentapeptide fusapentaxin A and the tripeptide fusatrixin A. The other enzymes from the cluster, FGM1, FGM2, FGM3 and FGM9 seem not to be involved in the biosynthesis of fusaoctaxin A and their functions have still to be determined. This Gibberella zeae (strain ATCC MYA-4620 / CBS 123657 / FGSC 9075 / NRRL 31084 / PH-1) (Wheat head blight fungus) protein is Cytochrome P450 monooxygenase FGM1.